A 386-amino-acid polypeptide reads, in one-letter code: Alanine racemase (386 aa).

Residue Lys48 is the Proton acceptor; specific for D-alanine of the active site. N6-(pyridoxal phosphate)lysine is present on Lys48. Position 149 (Arg149) interacts with substrate. The Proton acceptor; specific for L-alanine role is filled by Tyr278. Met326 provides a ligand contact to substrate.

The protein belongs to the alanine racemase family. Pyridoxal 5'-phosphate serves as cofactor.

It carries out the reaction L-alanine = D-alanine. It functions in the pathway amino-acid biosynthesis; D-alanine biosynthesis; D-alanine from L-alanine: step 1/1. Its function is as follows. Catalyzes the interconversion of L-alanine and D-alanine. May also act on other amino acids. This is Alanine racemase (alr) from Nostoc sp. (strain PCC 7120 / SAG 25.82 / UTEX 2576).